The sequence spans 607 residues: UvrABC system protein C (607 aa).

The region spanning 16 to 94 (GRPGVYRMFD…IKEWRPPYNI (79 aa)) is the GIY-YIG domain. The region spanning 203 to 238 (QQLGNELNAEMEKAAMALDFEKAAELRDQIALLRRV) is the UVR domain.

Belongs to the UvrC family. Interacts with UvrB in an incision complex.

It is found in the cytoplasm. The UvrABC repair system catalyzes the recognition and processing of DNA lesions. UvrC both incises the 5' and 3' sides of the lesion. The N-terminal half is responsible for the 3' incision and the C-terminal half is responsible for the 5' incision. This is UvrABC system protein C from Pseudomonas putida (strain ATCC 47054 / DSM 6125 / CFBP 8728 / NCIMB 11950 / KT2440).